The primary structure comprises 496 residues: MDISISWVVIIVFVLSYLILMDKWRASKLPGNPPPSPPKLPVIGHLHLLRGGLPQHVLRGITQKYGAVAHLQLGEVHSVVLSSAESTKQAMKVLDPTFADRFDSIGSQIMWHNNDDMIFSRYNDHWRQIRKICVSELLSPRNVRSFGFIRQDEMARLIRVFESSEGAAINASEEISKMSCAIVSRAAFGSVLKDQGKLADLVKEALSMASGFELADLYPSSWLLNLLCVNKYRLQRMRGRLDNILDGFLEEHKVKKSGEFGGEDIVDVLYRMQKDTEMKAPITNNGIKGFIFDVFSAGTETSATTIQWALSELMKNPEKMVKAQAEVREKLKGKTNPDVADVQELKYLHSVVKETLRLHPPFPLIPRLCKEECEVTGYTIPAKTRTLVNVWSIGRDPAYWKDPDTFNPDRFDEVSRDVIGNDFELIPFGAGRRVCPGLHFGLANVEVPLAQLLYHFDYKLPSAMTAADMDMSETPGLSGPRKNPLIMIPTIHNPTS.

Residues 1-21 (MDISISWVVIIVFVLSYLILM) traverse the membrane as a helical; Signal-anchor for type II membrane protein segment. Heme is bound at residue cysteine 435. The interval 471 to 496 (MSETPGLSGPRKNPLIMIPTIHNPTS) is disordered.

Belongs to the cytochrome P450 family. Heme serves as cofactor.

The protein resides in the membrane. It catalyses the reaction gamma-terpinene + 2 reduced [NADPH--hemoprotein reductase] + 2 O2 = carvacrol + 2 oxidized [NADPH--hemoprotein reductase] + 3 H2O + 2 H(+). It carries out the reaction (4S)-limonene + reduced [NADPH--hemoprotein reductase] + O2 = (1S,5R)-carveol + oxidized [NADPH--hemoprotein reductase] + H2O + H(+). The enzyme catalyses (4R)-limonene + reduced [NADPH--hemoprotein reductase] + O2 = (1R,5S)-carveol + oxidized [NADPH--hemoprotein reductase] + H2O + H(+). Its pathway is secondary metabolite biosynthesis; terpenoid biosynthesis. Involved in the biosynthesis of phenolic monoterpenes natural products thymol and carvacrol which have a broad range of biological activities acting as antimicrobial compounds, insecticides, antioxidants and pharmaceutical agents. Catalyzes the C2-hydroxylation of gamma-terpinene to produce carvacrol. Mediates also the C6-hydroxylation of (4S)-limonene and (4R)-limonene to form carveol. The sequence is that of Cytochrome P450 71D180 from Origanum majorana (Sweet marjoram).